The sequence spans 474 residues: tRNA-2-methylthio-N(6)-dimethylallyladenosine synthase (474 aa).

One can recognise an MTTase N-terminal domain in the interval Lys-3–Arg-120. Cys-12, Cys-49, Cys-83, Cys-157, Cys-161, and Cys-164 together coordinate [4Fe-4S] cluster. In terms of domain architecture, Radical SAM core spans Arg-143–Arg-375. The 64-residue stretch at Arg-378–Arg-441 folds into the TRAM domain.

It belongs to the methylthiotransferase family. MiaB subfamily. Monomer. Requires [4Fe-4S] cluster as cofactor.

The protein resides in the cytoplasm. It carries out the reaction N(6)-dimethylallyladenosine(37) in tRNA + (sulfur carrier)-SH + AH2 + 2 S-adenosyl-L-methionine = 2-methylsulfanyl-N(6)-dimethylallyladenosine(37) in tRNA + (sulfur carrier)-H + 5'-deoxyadenosine + L-methionine + A + S-adenosyl-L-homocysteine + 2 H(+). Catalyzes the methylthiolation of N6-(dimethylallyl)adenosine (i(6)A), leading to the formation of 2-methylthio-N6-(dimethylallyl)adenosine (ms(2)i(6)A) at position 37 in tRNAs that read codons beginning with uridine. This chain is tRNA-2-methylthio-N(6)-dimethylallyladenosine synthase, found in Shewanella putrefaciens (strain CN-32 / ATCC BAA-453).